A 227-amino-acid chain; its full sequence is Arginine ABC transporter permease protein ArtM (227 aa).

In terms of domain architecture, ABC transmembrane type-1 spans 13–209 (IPTSLLLTVV…IITGIATLLL (197 aa)). 5 helical membrane passes run 17–37 (LLLT…LTFL), 51–71 (LYLT…IYAG), 78–98 (IIDS…ALAL), 155–175 (IILV…DIMG), and 188–208 (LTIY…ATLL).

Belongs to the binding-protein-dependent transport system permease family. HisMQ subfamily. The complex is composed of two ATP-binding proteins (ArtP), two transmembrane proteins (ArtM and ArtQ) and a solute-binding protein (ArtI).

Its subcellular location is the cell inner membrane. Part of the ABC transporter complex ArtPIQM involved in arginine transport. Probably responsible for the translocation of the substrate across the membrane. The polypeptide is Arginine ABC transporter permease protein ArtM (artM) (Haemophilus influenzae (strain ATCC 51907 / DSM 11121 / KW20 / Rd)).